Consider the following 80-residue polypeptide: Small ribosomal subunit protein bS21 (80 aa).

The protein belongs to the bacterial ribosomal protein bS21 family.

This Rhodospirillum rubrum (strain ATCC 11170 / ATH 1.1.1 / DSM 467 / LMG 4362 / NCIMB 8255 / S1) protein is Small ribosomal subunit protein bS21.